Here is a 433-residue protein sequence, read N- to C-terminus: MTDLTPREIVSELDRFIIGQKEAKRAVAVALRNRWRRKQLADDLRDEVYPKNILMIGPTGVGKTEISRRLARLAKAPFLKVEATKFTEVGYVGRDVDSIIRDLVDAAIVETRARMREDVKARAAKAAEDRVIEAVAGRDAREQTREMFRGKLKRGELDNTVIEIDVADTSNPMQMLDPTGQGQMGMMNLGEIFGKAFGGRTQRRKMTVAESHDILMNEEADKLLDDEVVKATALEAVQQNGIVFIDEIDKVCARSDMRGADVSREGVQRDLLPLIEGTTVSTKYGPVKTDHILFIASGAFHIAKPSDLLPELQGRLPIRVELRALTEEDFVRILSETDNALTLQYKALMQTEKVGITFTEDGIAALASIAAEVNRSVENIGARRLYTVMERVFEELSFQAPDRSGEEVTVDAAYVEKNLGELARSSDLSRYVL.

ATP-binding positions include Ile18, Gly60–Glu65, Asp246, Glu311, and Arg383.

The protein belongs to the ClpX chaperone family. HslU subfamily. In terms of assembly, a double ring-shaped homohexamer of HslV is capped on each side by a ring-shaped HslU homohexamer. The assembly of the HslU/HslV complex is dependent on binding of ATP.

The protein localises to the cytoplasm. Its function is as follows. ATPase subunit of a proteasome-like degradation complex; this subunit has chaperone activity. The binding of ATP and its subsequent hydrolysis by HslU are essential for unfolding of protein substrates subsequently hydrolyzed by HslV. HslU recognizes the N-terminal part of its protein substrates and unfolds these before they are guided to HslV for hydrolysis. The sequence is that of ATP-dependent protease ATPase subunit HslU from Cereibacter sphaeroides (strain ATCC 17029 / ATH 2.4.9) (Rhodobacter sphaeroides).